The chain runs to 101 residues: NADH-quinone oxidoreductase subunit K (101 aa).

A run of 3 helical transmembrane segments spans residues 2–22, 29–49, and 63–83; these read ISLN…LVGV, IMLF…LVAI, and MFII…LILW.

Belongs to the complex I subunit 4L family. In terms of assembly, NDH-1 is composed of 14 different subunits. Subunits NuoA, H, J, K, L, M, N constitute the membrane sector of the complex.

It is found in the cell inner membrane. The catalysed reaction is a quinone + NADH + 5 H(+)(in) = a quinol + NAD(+) + 4 H(+)(out). Functionally, NDH-1 shuttles electrons from NADH, via FMN and iron-sulfur (Fe-S) centers, to quinones in the respiratory chain. The immediate electron acceptor for the enzyme in this species is believed to be ubiquinone. Couples the redox reaction to proton translocation (for every two electrons transferred, four hydrogen ions are translocated across the cytoplasmic membrane), and thus conserves the redox energy in a proton gradient. The chain is NADH-quinone oxidoreductase subunit K from Campylobacter hominis (strain ATCC BAA-381 / DSM 21671 / CCUG 45161 / LMG 19568 / NCTC 13146 / CH001A).